Here is a 291-residue protein sequence, read N- to C-terminus: Protease HtpX homolog (291 aa).

Transmembrane regions (helical) follow at residues 11–31 (INTF…GLLA) and 34–54 (FLGM…ACVQ). Residue His140 coordinates Zn(2+). Residue Glu141 is part of the active site. A Zn(2+)-binding site is contributed by His144. 2 consecutive transmembrane segments (helical) span residues 155-175 (IVFG…RALI) and 186-206 (AFSF…AMLV). Glu215 lines the Zn(2+) pocket.

It belongs to the peptidase M48B family. Zn(2+) is required as a cofactor.

The protein resides in the cell membrane. The chain is Protease HtpX homolog from Tropheryma whipplei (strain Twist) (Whipple's bacillus).